Consider the following 430-residue polypeptide: Drebrin-like protein (430 aa).

Positions 4-133 (NLSRNGPALQ…EPECIMEKVA (130 aa)) constitute an ADF-H domain. Threonine 26 bears the Phosphothreonine mark. 2 positions are modified to phosphoserine: glycine 137 and serine 160. Lysine 176 is modified (N6-acetyllysine). Positions 176–231 (KDSFWAKAEKEEENRRLEEKRRAEEAQRQLEQERRERELREAARREQRYQEQGGEA) form a coiled coil. Residues alanine 183 and serine 232 each carry the phosphoserine modification. The interval 219-283 (RREQRYQEQG…SSPQPGKLRS (65 aa)) is disordered. The segment covering 233–244 (PQRTWEQQQEVV) has biased composition (polar residues). A compositionally biased stretch (basic and acidic residues) spans 245 to 267 (SRNRNEQESAVHPREIFKQKERA). Residues 268–277 (MSTTSISSPQ) are compositionally biased toward polar residues. Residues serine 269, serine 272, serine 275, and serine 283 each carry the phosphoserine modification. Lysine 288 is modified (N6-acetyllysine). At threonine 291 the chain carries Phosphothreonine. Phosphotyrosine occurs at positions 334 and 344. An SH3 domain is found at 371–430 (GQGLCARALYDYQAADDTEISFDPENLITGIEVIDEGWWRGYGPDGHFGMFPANYVELIE).

This sequence belongs to the ABP1 family. Interacts with SHANK2, SHANK3 and SYN1. Interacts with FGD1 and DNM1. Interacts with ANKRD54. Interacts with COBL. Interacts with WASL and WIPF1. Interacts with MAP4K1 and PRAM1. Post-translationally, degraded by caspases during apoptosis.

Its subcellular location is the cytoplasm. It localises to the cytoskeleton. The protein localises to the cell projection. It is found in the lamellipodium. The protein resides in the ruffle. Its subcellular location is the cell cortex. It localises to the cytosol. The protein localises to the synapse. It is found in the perikaryon. The protein resides in the neuron projection. Its subcellular location is the cell membrane. It localises to the cytoplasmic vesicle. The protein localises to the clathrin-coated vesicle membrane. It is found in the golgi apparatus membrane. The protein resides in the podosome. Its subcellular location is the early endosome. It localises to the dendrite. The protein localises to the postsynaptic density. Its function is as follows. Adapter protein that binds F-actin and DNM1, and thereby plays a role in receptor-mediated endocytosis. Plays a role in the reorganization of the actin cytoskeleton, formation of cell projections, such as neurites, in neuron morphogenesis and synapse formation via its interaction with WASL and COBL. Does not bind G-actin and promote actin polymerization by itself. Required for the formation of organized podosome rosettes. May act as a common effector of antigen receptor-signaling pathways in leukocytes. Acts as a key component of the immunological synapse that regulates T-cell activation by bridging TCRs and the actin cytoskeleton to gene activation and endocytic processes. This is Drebrin-like protein (DBNL) from Homo sapiens (Human).